The chain runs to 593 residues: Arginine--tRNA ligase (593 aa).

Residues 138-148 (ANPTGPLHVGH) carry the 'HIGH' region motif.

The protein belongs to the class-I aminoacyl-tRNA synthetase family. In terms of assembly, monomer.

It localises to the cytoplasm. The catalysed reaction is tRNA(Arg) + L-arginine + ATP = L-arginyl-tRNA(Arg) + AMP + diphosphate. In Burkholderia cenocepacia (strain ATCC BAA-245 / DSM 16553 / LMG 16656 / NCTC 13227 / J2315 / CF5610) (Burkholderia cepacia (strain J2315)), this protein is Arginine--tRNA ligase.